Reading from the N-terminus, the 1098-residue chain is Early transcription factor large subunit homolog (1098 aa).

Positions 17–317 (KGGRAFFPCD…PNGQPLQRQQ (301 aa)) constitute a Helicase ATP-binding domain. 64–71 (WQTGTGKS) is a binding site for ATP. The short motif at 246–249 (DEIH) is the DEAH box element. The region spanning 489–689 (MMKDILSIIR…EGDKALRKHA (201 aa)) is the Helicase C-terminal domain.

The protein belongs to the DEAD box helicase family. DEAH subfamily.

Its subcellular location is the virion. It catalyses the reaction ATP + H2O = ADP + phosphate + H(+). Its function is as follows. Putative initation factor. The polypeptide is Early transcription factor large subunit homolog (African swine fever virus (isolate Tick/Malawi/Lil 20-1/1983) (ASFV)).